Here is a 387-residue protein sequence, read N- to C-terminus: Galactokinase (387 aa).

E36 to D39 contributes to the substrate binding site. Residues S70 and G125–S131 contribute to the ATP site. Mg(2+)-binding residues include S131 and E163. Residue D175 is the Proton acceptor of the active site. Substrate is bound at residue Y227.

It belongs to the GHMP kinase family. GalK subfamily.

The protein localises to the cytoplasm. The catalysed reaction is alpha-D-galactose + ATP = alpha-D-galactose 1-phosphate + ADP + H(+). Its pathway is carbohydrate metabolism; galactose metabolism. Functionally, catalyzes the transfer of the gamma-phosphate of ATP to D-galactose to form alpha-D-galactose-1-phosphate (Gal-1-P). The sequence is that of Galactokinase from Streptomyces coelicolor (strain ATCC BAA-471 / A3(2) / M145).